Consider the following 594-residue polypeptide: Probable pectinesterase/pectinesterase inhibitor 33 (594 aa).

Residues 1–22 (MLRGIFHICLLASFLLLPFSSA) form the signal peptide. Residues 28-75 (FTGGTDAPPPWDHNVSPPPETAPSPTPTSSPSTTSPPSPGPVAAPSPI) form a disordered region. The segment covering 34–71 (APPPWDHNVSPPPETAPSPTPTSSPSTTSPPSPGPVAA) has biased composition (pro residues). 4 N-linked (GlcNAc...) asparagine glycosylation sites follow: asparagine 77, asparagine 170, asparagine 213, and asparagine 226. A pectinesterase inhibitor 33 region spans residues 78-237 (GSVSGDMTWW…SDLIGNCLAV (160 aa)). The pectinesterase 33 stretch occupies residues 280 to 581 (HLVVAQDRSG…TVGSLIAGGS (302 aa)). Substrate contacts are provided by threonine 356 and glutamine 386. The active-site Proton donor; for pectinesterase activity is the aspartate 409. A disulfide bond links cysteine 423 and cysteine 443. Aspartate 430 (nucleophile; for pectinesterase activity) is an active-site residue. 2 residues coordinate substrate: arginine 498 and tryptophan 500.

This sequence in the N-terminal section; belongs to the PMEI family. In the C-terminal section; belongs to the pectinesterase family. Expressed in siliques.

Its subcellular location is the secreted. It is found in the cell wall. It catalyses the reaction [(1-&gt;4)-alpha-D-galacturonosyl methyl ester](n) + n H2O = [(1-&gt;4)-alpha-D-galacturonosyl](n) + n methanol + n H(+). It participates in glycan metabolism; pectin degradation; 2-dehydro-3-deoxy-D-gluconate from pectin: step 1/5. In terms of biological role, acts in the modification of cell walls via demethylesterification of cell wall pectin. The protein is Probable pectinesterase/pectinesterase inhibitor 33 (PME33) of Arabidopsis thaliana (Mouse-ear cress).